Here is a 247-residue protein sequence, read N- to C-terminus: Vacuolar iron transporter 1 (247 aa).

Residues 1 to 33 are Cytoplasmic-facing; sequence MVIAGVSPPTPSSENLLQEHEEKHFTATDVVRD. Residues 34–54 traverse the membrane as a helical segment; that stretch reads VIIGVSDGLTVPFALAAGLSG. Over 55–60 the chain is Vacuolar; that stretch reads ANVPSS. Residues 61–81 traverse the membrane as a helical segment; that stretch reads LILTAGIAEVAAGAISMGLGG. The Cytoplasmic segment spans residues 82–167; it reads YLAAKSEEDH…PRRALESAMT (86 aa). 6 residues coordinate Fe cation: E99, E102, E110, E113, M146, and E150. Residues 168–188 traverse the membrane as a helical segment; it reads IALAYVVGGLVPLSPYFFIPF. Residues 189 to 191 lie on the Vacuolar side of the membrane; it reads AKQ. A helical membrane pass occupies residues 192 to 212; it reads AMITSIAVTLLALVVFGYIKG. Residues 213–219 lie on the Cytoplasmic side of the membrane; that stretch reads RFTGSNP. Residues 220 to 240 form a helical membrane-spanning segment; sequence VLSSIQTAIIGALASAAAYAM. Residues 241–247 lie on the Vacuolar side of the membrane; that stretch reads AKAVQSV.

It belongs to the CCC1 family. In terms of tissue distribution, expressed at high levels in the blue epidermal cells of the inner bottom part of the petal (at protein level). No detectable expression in parenchyma and epidermis of the purple segments of the petal, parenchyma of the blue segments, leaf, stem, bulb and root (at protein level). High levels of mRNA in the blue epidermal cells of the inner bottom part of the petal. Low-levels of mRNA in the purple segments of the petal, stem, leaf, root, bulb and pistil.

The protein resides in the vacuole membrane. The catalysed reaction is Fe(2+)(in) = Fe(2+)(out). Its function is as follows. Vacuolar iron transporter involved in the transfer of iron ions from the cytosol to the vacuole for intracellular iron storage. Plays an essential role in the development of blue coloration in tulip petals most likely due to the accumulation of ferrous ions that can form complexes with anthocyanins. The protein is Vacuolar iron transporter 1 of Tulipa gesneriana (Garden tulip).